The chain runs to 396 residues: MAVRIKLKPGREKSLERRHPWVFSNGIHNVKGKPEAGETVDVVAHDGHWLGRGAWSPESQIQVRIWTFDREEEIDREFFKRRILRAQAGRDDLIREQGLTGYRLIAAESDGLPGITIDKYANVLVCQLLSMGADVWRDTIVDVLAELYPDCAIYERSDVDSRKKEGLASTMGLLHGTLPEMPVIIEENGIKIAVDVTKGHKTGFYLDQRDNRAMAARFVKGKSVLNCFCYTGTFGLYAANAGAASIENVDVSALALDTARLNMRVNGLNDDNVHYNEADVFKLLRQYRDEGKTFDVIVLDPPKFADNKSQLNGACRGYKDINMIALQLLNPGGVLLTFSCSGLMPADLFQKIVADAALDAKREIQFIERLSQASDHPIGSAFPEGFYLKGLVARVW.

The region spanning 2 to 79 (AVRIKLKPGR…REEEIDREFF (78 aa)) is the PUA domain.

The protein belongs to the methyltransferase superfamily. RlmI family.

It localises to the cytoplasm. The enzyme catalyses cytidine(1962) in 23S rRNA + S-adenosyl-L-methionine = 5-methylcytidine(1962) in 23S rRNA + S-adenosyl-L-homocysteine + H(+). Its function is as follows. Specifically methylates the cytosine at position 1962 (m5C1962) of 23S rRNA. In Shewanella sp. (strain ANA-3), this protein is Ribosomal RNA large subunit methyltransferase I.